The chain runs to 312 residues: Ribosomal protein L11 methyltransferase (312 aa).

The S-adenosyl-L-methionine site is built by T163, G184, D206, and N248.

This sequence belongs to the methyltransferase superfamily. PrmA family.

The protein localises to the cytoplasm. The catalysed reaction is L-lysyl-[protein] + 3 S-adenosyl-L-methionine = N(6),N(6),N(6)-trimethyl-L-lysyl-[protein] + 3 S-adenosyl-L-homocysteine + 3 H(+). Functionally, methylates ribosomal protein L11. The chain is Ribosomal protein L11 methyltransferase from Clostridium botulinum (strain Okra / Type B1).